The sequence spans 432 residues: 3-phosphoshikimate 1-carboxyvinyltransferase (432 aa).

The 3-phosphoshikimate site is built by Lys23, Ser24, and Arg28. Lys23 serves as a coordination point for phosphoenolpyruvate. Phosphoenolpyruvate contacts are provided by Gly95 and Arg123. The 3-phosphoshikimate site is built by Ser167, Gln169, Asp317, and Lys344. Gln169 is a phosphoenolpyruvate binding site. The active-site Proton acceptor is the Asp317. The phosphoenolpyruvate site is built by Arg348 and Arg390.

The protein belongs to the EPSP synthase family. Monomer.

The protein localises to the cytoplasm. It catalyses the reaction 3-phosphoshikimate + phosphoenolpyruvate = 5-O-(1-carboxyvinyl)-3-phosphoshikimate + phosphate. Its pathway is metabolic intermediate biosynthesis; chorismate biosynthesis; chorismate from D-erythrose 4-phosphate and phosphoenolpyruvate: step 6/7. In terms of biological role, catalyzes the transfer of the enolpyruvyl moiety of phosphoenolpyruvate (PEP) to the 5-hydroxyl of shikimate-3-phosphate (S3P) to produce enolpyruvyl shikimate-3-phosphate and inorganic phosphate. The chain is 3-phosphoshikimate 1-carboxyvinyltransferase from Staphylococcus aureus (strain MRSA252).